Consider the following 367-residue polypeptide: Farnesyl pyrophosphate synthase (367 aa).

Isopentenyl diphosphate-binding residues include K71, R74, and Q110. Residues D117 and D121 each coordinate Mg(2+). Position 126 (R126) interacts with dimethylallyl diphosphate. R127 lines the isopentenyl diphosphate pocket. 5 residues coordinate dimethylallyl diphosphate: K214, T215, Q254, K271, and K280.

The protein belongs to the FPP/GGPP synthase family. Homodimer. The cofactor is Mg(2+).

It localises to the cytoplasm. The catalysed reaction is isopentenyl diphosphate + dimethylallyl diphosphate = (2E)-geranyl diphosphate + diphosphate. The enzyme catalyses isopentenyl diphosphate + (2E)-geranyl diphosphate = (2E,6E)-farnesyl diphosphate + diphosphate. The protein operates within isoprenoid biosynthesis; farnesyl diphosphate biosynthesis; farnesyl diphosphate from geranyl diphosphate and isopentenyl diphosphate: step 1/1. It functions in the pathway isoprenoid biosynthesis; geranyl diphosphate biosynthesis; geranyl diphosphate from dimethylallyl diphosphate and isopentenyl diphosphate: step 1/1. In terms of biological role, catalyzes the sequential condensation of isopentenyl pyrophosphate with the allylic pyrophosphates, dimethylallyl pyrophosphate, and then with the resultant geranylpyrophosphate to the ultimate product farnesyl pyrophosphate. This chain is Farnesyl pyrophosphate synthase (FDPS), found in Gallus gallus (Chicken).